A 255-amino-acid chain; its full sequence is uncharacterized protein (255 aa).

It belongs to the methyltransferase superfamily.

This is an uncharacterized protein from Mycobacterium marinum (strain ATCC BAA-535 / M).